Consider the following 85-residue polypeptide: MAQKKGGGSTRNGRDSQPKMLGVKKFGGEVINAGSIIVRQRGTQFHPGVNVGIGKDHTLYALVDGQVSFAIKGSMNKRTVNVTAA.

The span at 1–10 (MAQKKGGGST) shows a compositional bias: gly residues. The segment at 1 to 21 (MAQKKGGGSTRNGRDSQPKML) is disordered.

It belongs to the bacterial ribosomal protein bL27 family.

This chain is Large ribosomal subunit protein bL27, found in Polaromonas naphthalenivorans (strain CJ2).